Here is a 127-residue protein sequence, read N- to C-terminus: Small ribosomal subunit protein uS11 (127 aa).

The protein belongs to the universal ribosomal protein uS11 family. Part of the 30S ribosomal subunit. Interacts with proteins S7 and S18. Binds to IF-3.

Its function is as follows. Located on the platform of the 30S subunit, it bridges several disparate RNA helices of the 16S rRNA. Forms part of the Shine-Dalgarno cleft in the 70S ribosome. The sequence is that of Small ribosomal subunit protein uS11 from Ruthia magnifica subsp. Calyptogena magnifica.